Consider the following 297-residue polypeptide: Acetyl-coenzyme A carboxylase carboxyl transferase subunit beta (297 aa).

One can recognise a CoA carboxyltransferase N-terminal domain in the interval 27–296; the sequence is LWHKCPSCEA…PEEAREAAAV (270 aa). Residues C31, C34, C50, and C53 each contribute to the Zn(2+) site. The C4-type zinc finger occupies 31–53; it reads CPSCEAVLYRPELEKTLDVCPKC.

The protein belongs to the AccD/PCCB family. In terms of assembly, acetyl-CoA carboxylase is a heterohexamer composed of biotin carboxyl carrier protein (AccB), biotin carboxylase (AccC) and two subunits each of ACCase subunit alpha (AccA) and ACCase subunit beta (AccD). Requires Zn(2+) as cofactor.

The protein localises to the cytoplasm. The enzyme catalyses N(6)-carboxybiotinyl-L-lysyl-[protein] + acetyl-CoA = N(6)-biotinyl-L-lysyl-[protein] + malonyl-CoA. It functions in the pathway lipid metabolism; malonyl-CoA biosynthesis; malonyl-CoA from acetyl-CoA: step 1/1. In terms of biological role, component of the acetyl coenzyme A carboxylase (ACC) complex. Biotin carboxylase (BC) catalyzes the carboxylation of biotin on its carrier protein (BCCP) and then the CO(2) group is transferred by the transcarboxylase to acetyl-CoA to form malonyl-CoA. The sequence is that of Acetyl-coenzyme A carboxylase carboxyl transferase subunit beta from Pseudomonas putida (strain ATCC 700007 / DSM 6899 / JCM 31910 / BCRC 17059 / LMG 24140 / F1).